A 289-amino-acid chain; its full sequence is Probable aquaporin PIP2-6 (289 aa).

Met1 carries the post-translational modification N-acetylmethionine. The Cytoplasmic segment spans residues 1-38; the sequence is MTKDELTEEESLSGKDYLDPPPVKTFEVRELKKWSFYR. Thr7 carries the post-translational modification Phosphothreonine. Ser11 bears the Phosphoserine mark. Residues 39–59 form a helical membrane-spanning segment; sequence AVIAEFIATLLFLYVTVLTVI. Residues 60–80 lie on the Extracellular side of the membrane; it reads GFKSQTDINAGGGACASVGLL. Residues 81–101 traverse the membrane as a helical segment; the sequence is GISWAFGGMIFILVYCTAGIS. Over 102–124 the chain is Cytoplasmic; that stretch reads GGHINPAVTFGLFLASKVSLVRA. Residues 106–108 carry the NPA 1 motif; it reads NPA. The helical transmembrane segment at 125-145 threads the bilayer; it reads VSYMVAQCLGATCGVGLVKVF. The Extracellular portion of the chain corresponds to 146 to 165; that stretch reads QSTYYNRYGGGANMLSDGYN. A helical membrane pass occupies residues 166 to 186; it reads VGVGVGAEIIGTFVLVYTVFS. Over 187–200 the chain is Cytoplasmic; the sequence is ATDPKRNARDSHIP. Residues 201–221 traverse the membrane as a helical segment; it reads VLAPLPIGFSVFMVHLATIPI. Topologically, residues 222-248 are extracellular; sequence TGTGINPARSFGAAVIYNNQKAWDDQW. The NPA 2 signature appears at 227-229; that stretch reads NPA. The helical transmembrane segment at 249–269 threads the bilayer; it reads IFWVGPFVGAAIAAFYHQFVL. The Cytoplasmic segment spans residues 270–289; sequence RAGAMKAYGSVRSQLHELHA. Phosphoserine is present on residues Ser279 and Ser282.

It belongs to the MIP/aquaporin (TC 1.A.8) family. PIP (TC 1.A.8.11) subfamily. Expressed above ground, and in flower buds.

Its subcellular location is the cell membrane. Aquaporins facilitate the transport of water and small neutral solutes across cell membranes. In Arabidopsis thaliana (Mouse-ear cress), this protein is Probable aquaporin PIP2-6 (PIP2-6).